Consider the following 167-residue polypeptide: DNA-directed RNA polymerase II subunit rpb-9 (167 aa).

The interval 28-49 (DDMYDQNGASPAPSQNEKPGKS) is disordered. Residues 34–44 (NGASPAPSQNE) show a composition bias toward polar residues. Residues Cys59, Cys62, Cys81, Cys84, Cys128, Cys131, Cys156, and Cys161 each coordinate Zn(2+). The segment at 59 to 84 (CPECNNMLYPREDKESRVLMYSCRNC) adopts a C4-type zinc-finger fold. The TFIIS-type zinc finger occupies 124–166 (EEHQCPVCGKSKAVFFQAQTKKAEEEMRLYYVCASQDCQHRWT).

The protein belongs to the archaeal RpoM/eukaryotic RPA12/RPB9/RPC11 RNA polymerase family. Component of the RNA polymerase II (Pol II) complex consisting of 12 subunits. As to expression, expressed in the soma and in the germline.

It is found in the nucleus. The protein resides in the nucleolus. DNA-dependent RNA polymerase catalyzes the transcription of DNA into RNA using the four ribonucleoside triphosphates as substrates. Component of RNA polymerase II which synthesizes mRNA precursors and many functional non-coding RNAs. Pol II is the central component of the basal RNA polymerase II transcription machinery. It is composed of mobile elements that move relative to each other. RPB9 is part of the upper jaw surrounding the central large cleft and thought to grab the incoming DNA template. Recruits ints-6, a component of the Integrator complex to PIWI-interacting RNA (piRNA) genes, to mediate Integrator complex-dependent cleavage of 3' ends of nascent transcripts upon RNA Pol II backtracking to terminate transcription and generate piRNA precursors. Promotes the biogenesis of secondary 22G-siRNAs (a class of 22 nucleotide siRNAs that possess a triphosphorylated guanine residue at the 5'-end). Involved in gene silencing mediated by a class of 21 nucleotide piRNAs that possess a uracil residue at the 5'-end (also called 21U-RNAs) and guide the Piwi protein prg-1 to its DNA targets for silencing. Plays a role in small RNA-directed transgenerational epigenetic inheritance (also called RNAe) over several generations. Not required for the transgenerational inheritance of exogenous small interfering RNAs (RNAi). May play a role in the silencing of the DNA transposable elements from the DNA transposon families, Chapaev-2 and CEMUDR1. The chain is DNA-directed RNA polymerase II subunit rpb-9 from Caenorhabditis elegans.